Consider the following 342-residue polypeptide: Anthranilate phosphoribosyltransferase (342 aa).

Residues Gly81, 84–85 (GD), Thr89, 91–94 (NVST), 109–117 (KHGNRAASS), and Ala121 contribute to the 5-phospho-alpha-D-ribose 1-diphosphate site. Gly81 contacts anthranilate. Ser93 contacts Mg(2+). Asn112 contacts anthranilate. Anthranilate is bound at residue Arg167. Mg(2+) is bound by residues Asp226 and Glu227.

Belongs to the anthranilate phosphoribosyltransferase family. In terms of assembly, homodimer. Requires Mg(2+) as cofactor.

The catalysed reaction is N-(5-phospho-beta-D-ribosyl)anthranilate + diphosphate = 5-phospho-alpha-D-ribose 1-diphosphate + anthranilate. The protein operates within amino-acid biosynthesis; L-tryptophan biosynthesis; L-tryptophan from chorismate: step 2/5. Its function is as follows. Catalyzes the transfer of the phosphoribosyl group of 5-phosphorylribose-1-pyrophosphate (PRPP) to anthranilate to yield N-(5'-phosphoribosyl)-anthranilate (PRA). This Beijerinckia indica subsp. indica (strain ATCC 9039 / DSM 1715 / NCIMB 8712) protein is Anthranilate phosphoribosyltransferase.